We begin with the raw amino-acid sequence, 365 residues long: 3-dehydroquinate synthase (365 aa).

Residues 69-74, 103-107, 127-128, lysine 140, lysine 149, and 167-170 each bind NAD(+); these read DGEAHK, GVIGD, TT, and TLNT. Zn(2+) is bound by residues glutamate 182, histidine 245, and histidine 262.

Belongs to the sugar phosphate cyclases superfamily. Dehydroquinate synthase family. The cofactor is Co(2+). Requires Zn(2+) as cofactor. NAD(+) serves as cofactor.

The protein localises to the cytoplasm. The enzyme catalyses 7-phospho-2-dehydro-3-deoxy-D-arabino-heptonate = 3-dehydroquinate + phosphate. It functions in the pathway metabolic intermediate biosynthesis; chorismate biosynthesis; chorismate from D-erythrose 4-phosphate and phosphoenolpyruvate: step 2/7. Functionally, catalyzes the conversion of 3-deoxy-D-arabino-heptulosonate 7-phosphate (DAHP) to dehydroquinate (DHQ). The chain is 3-dehydroquinate synthase from Pseudomonas putida (strain W619).